The primary structure comprises 61 residues: Large ribosomal subunit protein uL30 (61 aa).

This sequence belongs to the universal ribosomal protein uL30 family. As to quaternary structure, part of the 50S ribosomal subunit.

This is Large ribosomal subunit protein uL30 from Oenococcus oeni (strain ATCC BAA-331 / PSU-1).